The following is a 480-amino-acid chain: Ammonium transporter 2 member 4 (480 aa).

Over 1–27 (MELPSNLLPDEASPEWMNKGDNAWQLT) the chain is Extracellular. Residues 28–48 (AATMVGLQSIPGLVILYGSLV) form a helical membrane-spanning segment. Residues 49–51 (KKT) are Cytoplasmic-facing. Residues 52–72 (WAINSAFMAFYAFASVLLCWV) traverse the membrane as a helical segment. At 73–113 (SWAYQMSFGEKMVFFLGKPNVALDEKFLLGKAFLGNFPNAT) the chain is on the extracellular side. N-linked (GlcNAc...) asparagine glycosylation occurs at asparagine 111. Residues 114–134 (MVFYQGVFAGLTLILIAGALL) traverse the membrane as a helical segment. Topologically, residues 135–141 (GRMNIRA) are cytoplasmic. Residues 142–162 (WMLFVPLWVTFSYTVVAFSIW) form a helical membrane-spanning segment. Topologically, residues 163 to 175 (CPDGWLAKRGVID) are extracellular. A helical membrane pass occupies residues 176-196 (FAGGYVIHLSAGVAGFTAAYW). Residues 197-214 (VGPRADKDRETFPAATNN) are Cytoplasmic-facing. Residues 215 to 235 (MIMVLAGAGLLWMGWSGFNGG) traverse the membrane as a helical segment. At 236–242 (APFVAST) the chain is on the extracellular side. The helical transmembrane segment at 243 to 263 (IASLAILNTHVCTAASITVWV) threads the bilayer. Residues 264–274 (MLDTFYFGKPT) lie on the Cytoplasmic side of the membrane. The chain crosses the membrane as a helical span at residues 275 to 295 (VFGAVQGMITGLVCITPAAGV). Over 296–298 (VQG) the chain is Extracellular. Residues 299–319 (WAAILMGFISGSIPWYTMMVL) form a helical membrane-spanning segment. Over 320-334 (HNKVNFLKKIDDPMA) the chain is Cytoplasmic. Residues 335–355 (VFHTHAIAGALGGILTGFFAV) traverse the membrane as a helical segment. Topologically, residues 356 to 394 (PKLCRLFYMVPDWEKYIGLAYGLQNKGATQAGLKQMVIQ) are extracellular. A helical membrane pass occupies residues 395-415 (IEAIVFVICYNVLMTSLICLI). The Cytoplasmic portion of the chain corresponds to 416–480 (VRVIVPLRLN…SRSLGELQMV (65 aa)).

The protein belongs to the ammonia transporter channel (TC 1.A.11.2) family.

It localises to the cell membrane. Involved in ammonium transport. May be involved in arbuscular mycorrhizal (AM) symbiosis with AM fungi. The sequence is that of Ammonium transporter 2 member 4 from Medicago truncatula (Barrel medic).